We begin with the raw amino-acid sequence, 475 residues long: UDP-glucosyltransferase UGT13248 (475 aa).

A compositionally biased stretch (low complexity) spans 1–17 (METTVTAVSGTTSSSVG). The interval 1–20 (METTVTAVSGTTSSSVGHGA) is disordered. UDP-alpha-D-glucose is bound by residues histidine 38, serine 152, threonine 299, cysteine 352, 369–377 (HCGWNSTLE), and 393–394 (DQ).

The protein belongs to the UDP-glycosyltransferase family.

Its function is as follows. Involved in the detoxification of the Fusarium mycotoxin deoxynivalenol by the transfer of glucose from UDP-D-glucose to the hydroxyl group at C-3, forming deoxynivalenol-3-O-beta-D-glucoside. In Hordeum vulgare subsp. vulgare (Domesticated barley), this protein is UDP-glucosyltransferase UGT13248.